Consider the following 188-residue polypeptide: Probable manganese efflux pump MntP (188 aa).

5 helical membrane-spanning segments follow: residues 3 to 23 (ITAT…ASIG), 66 to 86 (LEWN…RMII), 106 to 128 (WLLV…GLAF), 143 to 163 (ATLI…PILG), and 168 to 188 (ILGG…HFHG).

Belongs to the MntP (TC 9.B.29) family.

It localises to the cell inner membrane. Its function is as follows. Probably functions as a manganese efflux pump. In Escherichia fergusonii (strain ATCC 35469 / DSM 13698 / CCUG 18766 / IAM 14443 / JCM 21226 / LMG 7866 / NBRC 102419 / NCTC 12128 / CDC 0568-73), this protein is Probable manganese efflux pump MntP.